The chain runs to 241 residues: Ribose-5-phosphate isomerase A (241 aa).

Substrate is bound by residues 28 to 31, 83 to 86, and 96 to 99; these read TGST, DGAD, and KGGG. The active-site Proton acceptor is the glutamate 105. A substrate-binding site is contributed by lysine 123.

It belongs to the ribose 5-phosphate isomerase family. In terms of assembly, homodimer.

The catalysed reaction is aldehydo-D-ribose 5-phosphate = D-ribulose 5-phosphate. The protein operates within carbohydrate degradation; pentose phosphate pathway; D-ribose 5-phosphate from D-ribulose 5-phosphate (non-oxidative stage): step 1/1. Functionally, catalyzes the reversible conversion of ribose-5-phosphate to ribulose 5-phosphate. This Bradyrhizobium diazoefficiens (strain JCM 10833 / BCRC 13528 / IAM 13628 / NBRC 14792 / USDA 110) protein is Ribose-5-phosphate isomerase A.